The primary structure comprises 465 residues: D-arabinitol 4-dehydrogenase (465 aa).

It belongs to the mannitol dehydrogenase family.

The catalysed reaction is D-arabinitol + NAD(+) = D-xylulose + NADH + H(+). The protein operates within carbohydrate metabolism; D-arabinitol metabolism. The sequence is that of D-arabinitol 4-dehydrogenase (dalD) from Ralstonia nicotianae (strain ATCC BAA-1114 / GMI1000) (Ralstonia solanacearum).